Reading from the N-terminus, the 198-residue chain is MKLDYEFFQRDAVSVAKDLIGKLLVRNLNGEELICRIVDTEAYCGPEDKGCHAYQNKRTNRTEVMYKSGGYVYVYLIYGLHYCFNVVVSKQDRPEAVFIRAGEPISGLKTMRDNRNIKSNKKTELTNGPGKLSQAMAIDKSLNGQDLVASKEIYLRHACDSQSYQIIPAKRVNIDYAEEYTDKLWRFYIRDNPFVSIN.

The protein belongs to the DNA glycosylase MPG family.

The sequence is that of Putative 3-methyladenine DNA glycosylase from Natranaerobius thermophilus (strain ATCC BAA-1301 / DSM 18059 / JW/NM-WN-LF).